The primary structure comprises 76 residues: Translational regulator CsrA (76 aa).

This sequence belongs to the CsrA/RsmA family. As to quaternary structure, homodimer; the beta-strands of each monomer intercalate to form a hydrophobic core, while the alpha-helices form wings that extend away from the core.

The protein localises to the cytoplasm. In terms of biological role, a translational regulator that binds mRNA to regulate translation initiation and/or mRNA stability. Usually binds in the 5'-UTR at or near the Shine-Dalgarno sequence preventing ribosome-binding, thus repressing translation. Its main target seems to be the major flagellin gene, while its function is anatagonized by FliW. This chain is Translational regulator CsrA, found in Helicobacter pylori (strain J99 / ATCC 700824) (Campylobacter pylori J99).